The sequence spans 225 residues: Ribonuclease 3 (225 aa).

Positions 2–128 (LSTLIKKLKI…LFGAIYLDLG (127 aa)) constitute an RNase III domain. Glu43 serves as a coordination point for Mg(2+). The active site involves Asp47. Mg(2+)-binding residues include Asn114 and Glu117. Glu117 is a catalytic residue. The region spanning 152 to 220 (DFKTQLQELV…ARYVLNILSK (69 aa)) is the DRBM domain.

The protein belongs to the ribonuclease III family. As to quaternary structure, homodimer. Mg(2+) serves as cofactor.

It localises to the cytoplasm. The enzyme catalyses Endonucleolytic cleavage to 5'-phosphomonoester.. Digests double-stranded RNA. Involved in the processing of primary rRNA transcript to yield the immediate precursors to the large and small rRNAs (23S and 16S). Processes some mRNAs, and tRNAs when they are encoded in the rRNA operon. Processes pre-crRNA and tracrRNA of type II CRISPR loci if present in the organism. This chain is Ribonuclease 3, found in Phytoplasma mali (strain AT).